The sequence spans 160 residues: Phosphopantetheine adenylyltransferase (160 aa).

Threonine 9 contributes to the substrate binding site. ATP is bound by residues threonine 9–phenylalanine 10 and histidine 17. Residues lysine 41, leucine 73, and arginine 87 each coordinate substrate. Residues glycine 88 to arginine 90, glutamate 98, and leucine 123 to threonine 129 contribute to the ATP site.

The protein belongs to the bacterial CoaD family. Homohexamer. Mg(2+) is required as a cofactor.

The protein localises to the cytoplasm. The catalysed reaction is (R)-4'-phosphopantetheine + ATP + H(+) = 3'-dephospho-CoA + diphosphate. It functions in the pathway cofactor biosynthesis; coenzyme A biosynthesis; CoA from (R)-pantothenate: step 4/5. Reversibly transfers an adenylyl group from ATP to 4'-phosphopantetheine, yielding dephospho-CoA (dPCoA) and pyrophosphate. The protein is Phosphopantetheine adenylyltransferase of Marinobacter nauticus (strain ATCC 700491 / DSM 11845 / VT8) (Marinobacter aquaeolei).